A 425-amino-acid chain; its full sequence is MDRNKEIFEESKKYMPGGVNSPVRSFGSVGINPPVIKSGKGAMIKDENGNEYIDFVLAWGPMILGHCDEDVVKAIKKTSEESIAFGASTKLELDLAKLLCETLDNVDMIRMVNSGTEATMSAVKLARGYTKKDKIIKFAGCYHGHFDGFLIEAGSGVLTEGIPGCLGVPEESIKNTLIGIYNDEKQVEELFEKYGNDIAGIIIEPVAGNMGVVKCDPKFMRKLRELCDKYGALLIFDEVMCGFRVAYKGAQTLFDVKPDLVTYAKIMGGGLPCGAYGGRREIMENLSPLGGVYQAGTMSGNPIVMSAGLATVKKLYENPSYYDHIEKIGSKLEKGVLEIAKKKGLGLVVNRQGGMMTLFFTDLKEVKCYDDVKTCDGERFKRYFLHMLNKGFNIPPSQFEAMFLSVKHTEEHIDKFLEAFESFEG.

Lysine 265 bears the N6-(pyridoxal phosphate)lysine mark.

Belongs to the class-III pyridoxal-phosphate-dependent aminotransferase family. HemL subfamily. In terms of assembly, homodimer. It depends on pyridoxal 5'-phosphate as a cofactor.

It localises to the cytoplasm. The catalysed reaction is (S)-4-amino-5-oxopentanoate = 5-aminolevulinate. It functions in the pathway porphyrin-containing compound metabolism; protoporphyrin-IX biosynthesis; 5-aminolevulinate from L-glutamyl-tRNA(Glu): step 2/2. The sequence is that of Glutamate-1-semialdehyde 2,1-aminomutase from Clostridium perfringens (strain ATCC 13124 / DSM 756 / JCM 1290 / NCIMB 6125 / NCTC 8237 / Type A).